The chain runs to 215 residues: 3-dehydroquinate dehydratase (215 aa).

3-dehydroquinate is bound by residues 27–29 and arginine 54; that span reads ELR. The Proton donor/acceptor role is filled by histidine 112. The Schiff-base intermediate with substrate role is filled by lysine 139. 3-dehydroquinate-binding residues include arginine 176 and glutamine 198.

Belongs to the type-I 3-dehydroquinase family. In terms of assembly, homodimer.

It carries out the reaction 3-dehydroquinate = 3-dehydroshikimate + H2O. It participates in metabolic intermediate biosynthesis; chorismate biosynthesis; chorismate from D-erythrose 4-phosphate and phosphoenolpyruvate: step 3/7. Involved in the third step of the chorismate pathway, which leads to the biosynthesis of aromatic amino acids. Catalyzes the cis-dehydration of 3-dehydroquinate (DHQ) and introduces the first double bond of the aromatic ring to yield 3-dehydroshikimate. The chain is 3-dehydroquinate dehydratase from Pyrococcus abyssi (strain GE5 / Orsay).